We begin with the raw amino-acid sequence, 98 residues long: NADH-ubiquinone oxidoreductase chain 4L (98 aa).

3 consecutive transmembrane segments (helical) span residues 1 to 21 (MSPI…GLLI), 30 to 50 (LLCL…LALT), and 61 to 81 (IILL…LVMV).

This sequence belongs to the complex I subunit 4L family. As to quaternary structure, core subunit of respiratory chain NADH dehydrogenase (Complex I) which is composed of 45 different subunits.

The protein resides in the mitochondrion inner membrane. The catalysed reaction is a ubiquinone + NADH + 5 H(+)(in) = a ubiquinol + NAD(+) + 4 H(+)(out). Functionally, core subunit of the mitochondrial membrane respiratory chain NADH dehydrogenase (Complex I) which catalyzes electron transfer from NADH through the respiratory chain, using ubiquinone as an electron acceptor. Part of the enzyme membrane arm which is embedded in the lipid bilayer and involved in proton translocation. In Chrysochloris asiatica (Cape golden mole), this protein is NADH-ubiquinone oxidoreductase chain 4L (MT-ND4L).